The sequence spans 421 residues: Magnesium transporter MRS2-5 (421 aa).

2 helical membrane-spanning segments follow: residues 357 to 377 (LLLT…AVFG) and 393 to 413 (YVLL…VLYF). Positions 377–379 (GMN) match the Required for magnesium transport activity motif.

The protein belongs to the CorA metal ion transporter (MIT) (TC 1.A.35.5) family. Expressed in the whole plant.

The protein resides in the membrane. Magnesium transporter that may mediate the influx of magnesium. The polypeptide is Magnesium transporter MRS2-5 (MRS2-5) (Arabidopsis thaliana (Mouse-ear cress)).